The sequence spans 287 residues: Glutamate racemase (287 aa).

A compositionally biased stretch (polar residues) spans 1-15 (MATKPQDANTTSREA). A disordered region spans residues 1–25 (MATKPQDANTTSREAITSKADSPPR). Substrate is bound by residues 32-33 (DS) and 64-65 (YG). The active-site Proton donor/acceptor is Cys-96. 97–98 (NT) is a binding site for substrate. Cys-208 functions as the Proton donor/acceptor in the catalytic mechanism. 209-210 (TH) contributes to the substrate binding site.

This sequence belongs to the aspartate/glutamate racemases family.

It carries out the reaction L-glutamate = D-glutamate. The protein operates within cell wall biogenesis; peptidoglycan biosynthesis. In terms of biological role, provides the (R)-glutamate required for cell wall biosynthesis. This Yersinia pseudotuberculosis serotype I (strain IP32953) protein is Glutamate racemase.